Here is a 473-residue protein sequence, read N- to C-terminus: Fumarate hydratase class II (473 aa).

Substrate contacts are provided by residues 105 to 107 (SGT), 130 to 133 (HPND), 140 to 142 (SSN), and T188. H189 functions as the Proton donor/acceptor in the catalytic mechanism. S319 is an active-site residue. Substrate contacts are provided by residues S320 and 325–327 (KVN).

The protein belongs to the class-II fumarase/aspartase family. Fumarase subfamily. Homotetramer.

The protein localises to the cytoplasm. It carries out the reaction (S)-malate = fumarate + H2O. Its pathway is carbohydrate metabolism; tricarboxylic acid cycle; (S)-malate from fumarate: step 1/1. Involved in the TCA cycle. Catalyzes the stereospecific interconversion of fumarate to L-malate. The sequence is that of Fumarate hydratase class II from Xylella fastidiosa (strain 9a5c).